A 185-amino-acid polypeptide reads, in one-letter code: Ribosome-recycling factor (185 aa).

This sequence belongs to the RRF family.

It is found in the cytoplasm. Functionally, responsible for the release of ribosomes from messenger RNA at the termination of protein biosynthesis. May increase the efficiency of translation by recycling ribosomes from one round of translation to another. This chain is Ribosome-recycling factor, found in Thioalkalivibrio sulfidiphilus (strain HL-EbGR7).